The chain runs to 617 residues: Vacuolar protein sorting-associated protein 33B (617 aa).

The protein belongs to the STXBP/unc-18/SEC1 family. Interacts with vipas39. Widely expressed from 4 hours post-fertilization (hpf) to 24 hpf. At 48 hpf, localized to brain, retina, ear, liver and proximal intestine. This expression pattern is more pronounced at 72 hpf and persists through 5 days post-fertilization (dpf). At 3 dpf and 4 dpf, expression in the liver is predominantly in developing biliary epithelial cells. No expression detected in kidney or spinal cord.

The protein localises to the late endosome membrane. Its subcellular location is the lysosome membrane. In terms of biological role, may play a role in vesicle-mediated protein trafficking to lysosomal compartments and in membrane docking/fusion reactions of late endosomes/lysosomes. Required for proper trafficking and targeting of the collagen-modifying enzyme lysyl hydroxylase 3 (LH3) to intracellular collagen. Mediates phagolysosomal fusion in macrophages. Proposed to be involved in endosomal maturation implicating vipas39. In epithelial cells, the vps33b:vipas39 complex may play a role in the apical recycling pathway and in the maintenance of the apical-basolateral polarity. Plays a role in bile duct development. The polypeptide is Vacuolar protein sorting-associated protein 33B (Danio rerio (Zebrafish)).